A 100-amino-acid polypeptide reads, in one-letter code: Small ribosomal subunit protein uS14c (100 aa).

Belongs to the universal ribosomal protein uS14 family. Part of the 30S ribosomal subunit.

It is found in the plastid. The protein localises to the chloroplast. In terms of biological role, binds 16S rRNA, required for the assembly of 30S particles. This is Small ribosomal subunit protein uS14c from Adiantum capillus-veneris (Maidenhair fern).